The following is a 977-amino-acid chain: Aspartate, glycine, lysine and serine-rich protein (977 aa).

The interval 23–116 (GVLPDVDSGF…PITNLGSSTS (94 aa)) is disordered. The span at 37–50 (EETKSEPKQPDTKP) shows a compositional bias: basic and acidic residues. Polar residues predominate over residues 51 to 63 (EQPSVSKPDSSVN). N-linked (GlcNAc...) asparagine glycosylation is present at N136. 2 disordered regions span residues 246-767 (AGGG…TSRG) and 780-922 (GGGK…GSGL). Low complexity predominate over residues 251–278 (YYSDSSDSSDSDSSGSDSSESGSSESGS). Residues 309–325 (NGSPDNGTPGSGSSRYT) show a composition bias toward polar residues. The segment covering 410–427 (LEDELLGSDSSDEDDIDD) has biased composition (acidic residues). Gly residues predominate over residues 428–443 (GLGGLGLGAGPGGPGG). Basic residues-rich tracts occupy residues 447–457 (TPKHKPRTDKK) and 465–540 (KRKP…VQRK). The segment covering 541 to 557 (QPREYKQESPEVEREHS) has biased composition (basic and acidic residues). Over residues 572–583 (KILITSLTSSRG) the composition is skewed to low complexity. Residues 591 to 643 (DGSGSGNGGGDDGNGGGAGNGGGAGNGGGAGNGGGAGNGGGNGGGGNGGGGND) are compositionally biased toward gly residues. Positions 660-675 (EHRNRCEDDDDYREKC) are enriched in basic and acidic residues. Positions 700–724 (SGSSSSSSATESESSSTSTTPSTSS) are enriched in low complexity. 3 stretches are compositionally biased toward polar residues: residues 730–744 (ILSTLSGRSQKTRSG), 758–767 (SRPSVATSRG), and 785–801 (STGTTVTSKPSTGTSSA). Composition is skewed to low complexity over residues 803–814 (GLDLSGLLGQLG), 822–857 (GPKPDSKPSTGSPSTTSKPSTGSSSGPGLDLSGLLG), and 870–907 (KKPTASSKPTAPSTPSKSTGSSPGKGLDLSGLLGKLSP).

In terms of tissue distribution, component of the acid-insoluble and acid-soluble organic matrix of calcified layers of the shell (at protein level).

The protein resides in the secreted. This chain is Aspartate, glycine, lysine and serine-rich protein, found in Lottia gigantea (Giant owl limpet).